A 753-amino-acid polypeptide reads, in one-letter code: Glycerophosphodiester phosphodiesterase GDPDL6 (753 aa).

The N-terminal stretch at 1 to 17 (MLRFFILFSLFLHSSVA) is a signal peptide. 2 consecutive GP-PDE domains span residues 41–339 (PAVV…SQSI) and 355–654 (ALVI…TRYL). N-linked (GlcNAc...) asparagine glycosylation is found at Asn-304, Asn-516, Asn-603, and Asn-715. The segment at 707–729 (PPVAKLASNGTEGGPPQTPPRSG) is disordered. A helical transmembrane segment spans residues 731 to 751 (VAIAANLSLSLLAMMALGLLY).

This sequence belongs to the glycerophosphoryl diester phosphodiesterase family. Expressed in flowers and siliques.

The protein resides in the membrane. The enzyme catalyses a sn-glycero-3-phosphodiester + H2O = an alcohol + sn-glycerol 3-phosphate + H(+). The polypeptide is Glycerophosphodiester phosphodiesterase GDPDL6 (Arabidopsis thaliana (Mouse-ear cress)).